The chain runs to 563 residues: Putative ABC transporter ATP-binding protein SCO2324 (563 aa).

Residues 2-243 (IRFEDVSVTY…SPVYPPVVGL (242 aa)) enclose the ABC transporter 1 domain. Residue 36–43 (GPSGVGKS) participates in ATP binding. The tract at residues 271-317 (AGREIPDHTPPPSAPLPAPPAPRPVTSRWRRRGKRPENPSAPTPYAA) is disordered. Pro residues predominate over residues 278-293 (HTPPPSAPLPAPPAPR). Residues 317–545 (AEVRSLAVRR…SPSYAPQVAK (229 aa)) enclose the ABC transporter 2 domain. 349 to 356 (GRNGAGKS) lines the ATP pocket.

The protein belongs to the ABC transporter superfamily.

The protein resides in the cell membrane. In terms of biological role, probably part of an ABC transporter complex. Responsible for energy coupling to the transport system. The sequence is that of Putative ABC transporter ATP-binding protein SCO2324 from Streptomyces coelicolor (strain ATCC BAA-471 / A3(2) / M145).